Consider the following 314-residue polypeptide: DNA-directed RNA polymerase subunit alpha (314 aa).

Residues 1–229 (MLESKLKAPV…EHLNYFANPE (229 aa)) form an alpha N-terminal domain (alpha-NTD) region. An alpha C-terminal domain (alpha-CTD) region spans residues 246-314 (SAEEDLDLPL…LAKKGFTLKE (69 aa)).

This sequence belongs to the RNA polymerase alpha chain family. In terms of assembly, homodimer. The RNAP catalytic core consists of 2 alpha, 1 beta, 1 beta' and 1 omega subunit. When a sigma factor is associated with the core the holoenzyme is formed, which can initiate transcription.

The enzyme catalyses RNA(n) + a ribonucleoside 5'-triphosphate = RNA(n+1) + diphosphate. Its function is as follows. DNA-dependent RNA polymerase catalyzes the transcription of DNA into RNA using the four ribonucleoside triphosphates as substrates. This chain is DNA-directed RNA polymerase subunit alpha (rpoA), found in Thermus aquaticus.